The following is a 359-amino-acid chain: Fructose-bisphosphate aldolase (359 aa).

D-glyceraldehyde 3-phosphate is bound at residue Ser50. Asp83 acts as the Proton donor in catalysis. The Zn(2+) site is built by His84, Asp105, Glu142, and His198. Gly199 lines the dihydroxyacetone phosphate pocket. His232 is a Zn(2+) binding site. Dihydroxyacetone phosphate is bound by residues 233-235 and 275-278; these read GSS and NIDT.

Requires Zn(2+) as cofactor.

The enzyme catalyses beta-D-fructose 1,6-bisphosphate = D-glyceraldehyde 3-phosphate + dihydroxyacetone phosphate. It participates in carbohydrate degradation; glycolysis; D-glyceraldehyde 3-phosphate and glycerone phosphate from D-glucose: step 4/4. Functionally, catalyzes the aldol condensation of dihydroxyacetone phosphate (DHAP or glycerone-phosphate) with glyceraldehyde 3-phosphate (G3P) to form fructose 1,6-bisphosphate (FBP) in gluconeogenesis and the reverse reaction in glycolysis. This is Fructose-bisphosphate aldolase from Nostoc sp. (strain PCC 7120 / SAG 25.82 / UTEX 2576).